A 501-amino-acid polypeptide reads, in one-letter code: Cytochrome P450 71D6 (501 aa).

Residue Cys-442 coordinates heme.

This sequence belongs to the cytochrome P450 family. It depends on heme as a cofactor.

This chain is Cytochrome P450 71D6 (CYP71D6), found in Solanum chacoense (Chaco potato).